The following is a 64-amino-acid chain: Alpha-toxin Ts5 (64 aa).

In terms of domain architecture, LCN-type CS-alpha/beta spans 2–64 (KDGYPVEGDN…KEPTKTSGRC (63 aa)). Cystine bridges form between cysteine 12/cysteine 64, cysteine 16/cysteine 38, cysteine 24/cysteine 44, and cysteine 28/cysteine 46.

The protein belongs to the long (4 C-C) scorpion toxin superfamily. Sodium channel inhibitor family. Alpha subfamily. In terms of tissue distribution, expressed by the venom gland.

Its subcellular location is the secreted. In terms of biological role, alpha toxins bind voltage-independently at site-3 of sodium channels (Nav) and inhibit the inactivation of the activated channels, thereby blocking neuronal transmission. By extending the depolarized period it indirectly affects beta-cell voltage-dependent potassium channels, thus increasing potassium permeability. The sequence is that of Alpha-toxin Ts5 from Tityus serrulatus (Brazilian scorpion).